The sequence spans 101 residues: Small ribosomal subunit protein uS14 (101 aa).

Residues 51–70 are disordered; the sequence is LPRDSSPSRQRNRCSQTGRP. The segment covering 52–68 has biased composition (polar residues); it reads PRDSSPSRQRNRCSQTG.

This sequence belongs to the universal ribosomal protein uS14 family. In terms of assembly, part of the 30S ribosomal subunit. Contacts proteins S3 and S10.

Functionally, binds 16S rRNA, required for the assembly of 30S particles and may also be responsible for determining the conformation of the 16S rRNA at the A site. This is Small ribosomal subunit protein uS14 from Mannheimia succiniciproducens (strain KCTC 0769BP / MBEL55E).